The primary structure comprises 385 residues: S-adenosylmethionine synthase (385 aa).

His16 is an ATP binding site. Residue Asp18 coordinates Mg(2+). Residue Glu44 participates in K(+) binding. L-methionine is bound by residues Glu57 and Gln100. The tract at residues 100-110 (QSPDINQGVDR) is flexible loop. ATP is bound by residues 164–166 (DGK), 230–231 (KF), Asp239, 245–246 (RK), Ala262, and Lys266. Residue Asp239 participates in L-methionine binding. Position 270 (Lys270) interacts with L-methionine.

This sequence belongs to the AdoMet synthase family. In terms of assembly, homotetramer; dimer of dimers. The cofactor is Mg(2+). Requires K(+) as cofactor.

It localises to the cytoplasm. The catalysed reaction is L-methionine + ATP + H2O = S-adenosyl-L-methionine + phosphate + diphosphate. The protein operates within amino-acid biosynthesis; S-adenosyl-L-methionine biosynthesis; S-adenosyl-L-methionine from L-methionine: step 1/1. In terms of biological role, catalyzes the formation of S-adenosylmethionine (AdoMet) from methionine and ATP. The overall synthetic reaction is composed of two sequential steps, AdoMet formation and the subsequent tripolyphosphate hydrolysis which occurs prior to release of AdoMet from the enzyme. This chain is S-adenosylmethionine synthase, found in Helicobacter pylori (strain HPAG1).